The primary structure comprises 120 residues: Large ribosomal subunit protein bL17 (120 aa).

Belongs to the bacterial ribosomal protein bL17 family. Part of the 50S ribosomal subunit. Contacts protein L32.

This Bacillus subtilis (strain 168) protein is Large ribosomal subunit protein bL17.